The sequence spans 130 residues: Ribosome biogenesis inhibitor MINAS-60 (130 aa).

The tract at residues 61-130 is disordered; it reads SRVRRIPTRP…RRRRPVTSSC (70 aa). Positions 109 to 130 are enriched in basic residues; sequence KGRRRRRRRMRRRRRRPVTSSC.

Interacts with 60S ribosome assembly factors GTPBP4 and MRTO4.

Its subcellular location is the nucleus. It is found in the nucleolus. Acts as a late-stage inhibitor of pre-60S ribosome assembly by preventing pre-60S ribosome export from nucleus. The protein is Ribosome biogenesis inhibitor MINAS-60 of Homo sapiens (Human).